A 343-amino-acid polypeptide reads, in one-letter code: Uroporphyrinogen decarboxylase (343 aa).

Substrate-binding positions include 23-27 (RQAGR), Asp73, Tyr149, Thr204, and His320.

The protein belongs to the uroporphyrinogen decarboxylase family. As to quaternary structure, homodimer.

It is found in the cytoplasm. It catalyses the reaction uroporphyrinogen III + 4 H(+) = coproporphyrinogen III + 4 CO2. The protein operates within porphyrin-containing compound metabolism; protoporphyrin-IX biosynthesis; coproporphyrinogen-III from 5-aminolevulinate: step 4/4. Functionally, catalyzes the decarboxylation of four acetate groups of uroporphyrinogen-III to yield coproporphyrinogen-III. This is Uroporphyrinogen decarboxylase from Bradyrhizobium sp. (strain BTAi1 / ATCC BAA-1182).